Consider the following 1829-residue polypeptide: Protein TIC 214 (1829 aa).

6 consecutive transmembrane segments (helical) span residues 18–38 (IINSVVVVGLYYGFMTTFSIG), 67–87 (FIAGQLMMFISIYYAPLHLAL), 90–110 (PHTITVLALPYLLFHFFWNNP), 127–147 (LSIQCVFLNNLIFQLFNHFLL), 174–194 (FVGWLIGHILFMKWVGLVLVW), and 224–244 (IFSILLFITCIYYLGRIPSPI). Residues 260–272 (RDVEIEKTFERGG) show a composition bias toward basic and acidic residues. Residues 260–301 (RDVEIEKTFERGGTKQGQEVSAEEDPSPSLFSEEKEDPDKIE) are disordered.

It belongs to the TIC214 family. In terms of assembly, part of the Tic complex.

The protein resides in the plastid. Its subcellular location is the chloroplast inner membrane. Functionally, involved in protein precursor import into chloroplasts. May be part of an intermediate translocation complex acting as a protein-conducting channel at the inner envelope. This is Protein TIC 214 from Citrus sinensis (Sweet orange).